Reading from the N-terminus, the 354-residue chain is Probable L-ascorbate-6-phosphate lactonase UlaG (354 aa).

The protein belongs to the UlaG family. It depends on a divalent metal cation as a cofactor.

Its subcellular location is the cytoplasm. It catalyses the reaction L-ascorbate 6-phosphate + H2O = 3-dehydro-L-gulonate 6-phosphate. It participates in cofactor degradation; L-ascorbate degradation; D-xylulose 5-phosphate from L-ascorbate: step 1/4. Its function is as follows. Probably catalyzes the hydrolysis of L-ascorbate-6-P into 3-keto-L-gulonate-6-P. Is essential for L-ascorbate utilization under anaerobic conditions. This is Probable L-ascorbate-6-phosphate lactonase UlaG from Salmonella agona (strain SL483).